Here is a 346-residue protein sequence, read N- to C-terminus: Phosphoribosylformylglycinamidine cyclo-ligase (346 aa).

The protein belongs to the AIR synthase family.

Its subcellular location is the cytoplasm. It carries out the reaction 2-formamido-N(1)-(5-O-phospho-beta-D-ribosyl)acetamidine + ATP = 5-amino-1-(5-phospho-beta-D-ribosyl)imidazole + ADP + phosphate + H(+). Its pathway is purine metabolism; IMP biosynthesis via de novo pathway; 5-amino-1-(5-phospho-D-ribosyl)imidazole from N(2)-formyl-N(1)-(5-phospho-D-ribosyl)glycinamide: step 2/2. This is Phosphoribosylformylglycinamidine cyclo-ligase from Bacillus cereus (strain G9842).